Consider the following 94-residue polypeptide: Large ribosomal subunit protein bL27 (94 aa).

A propeptide spanning residues 1-9 is cleaved from the precursor; it reads MTLNNLQLF. Residues 9–33 are disordered; that stretch reads FAHKKGGGSTSNGRDSQAKRLGAKA.

This sequence belongs to the bacterial ribosomal protein bL27 family. The N-terminus is cleaved by ribosomal processing cysteine protease Prp.

The sequence is that of Large ribosomal subunit protein bL27 from Streptococcus pneumoniae serotype 4 (strain ATCC BAA-334 / TIGR4).